A 43-amino-acid polypeptide reads, in one-letter code: Potassium channel toxin gamma-KTx 3.2 (43 aa).

Disulfide bonds link Cys-5–Cys-23, Cys-11–Cys-34, Cys-20–Cys-39, and Cys-24–Cys-41.

It belongs to the ergtoxin family. Gamma-KTx 3 subfamily. Expressed by the venom gland.

The protein resides in the secreted. Functionally, blocks Kv11/ERG potassium channels. This Centruroides elegans (Bark scorpion) protein is Potassium channel toxin gamma-KTx 3.2.